The following is a 231-amino-acid chain: tRNA (guanine-N(1)-)-methyltransferase (231 aa).

S-adenosyl-L-methionine-binding positions include G112 and 132 to 137 (IGDYIL).

It belongs to the RNA methyltransferase TrmD family. As to quaternary structure, homodimer.

The protein localises to the cytoplasm. The enzyme catalyses guanosine(37) in tRNA + S-adenosyl-L-methionine = N(1)-methylguanosine(37) in tRNA + S-adenosyl-L-homocysteine + H(+). Its function is as follows. Specifically methylates guanosine-37 in various tRNAs. The sequence is that of tRNA (guanine-N(1)-)-methyltransferase from Sulfurimonas denitrificans (strain ATCC 33889 / DSM 1251) (Thiomicrospira denitrificans (strain ATCC 33889 / DSM 1251)).